Consider the following 517-residue polypeptide: DNA-binding protein (517 aa).

Polar residues predominate over residues 1–10 (MASRGGNQSS). Residues 1-110 (MASRGGNQSS…DISQDSEEER (110 aa)) are disordered. Low complexity predominate over residues 64 to 80 (VLVSETSRSSLSPERSN). Residues 87 to 96 (PKKKPRKTKH) are compositionally biased toward basic residues. Residue Tyr180 is modified to Phosphotyrosine; by host. Residues Cys269 and His271 each contribute to the Zn(2+) site. The interval 282–316 (IEMDVASENGQRAMKENPDRAKITQNRWGRNVVQL) is flexible loop. Cys324, Cys340, Cys382, Cys384, Cys436, and Cys453 together coordinate Zn(2+). Positions 501-517 (VSLPAGHYDSRQNPFDF) are C-terminal arm, DBP binding.

Belongs to the adenoviridae E2A DNA-binding protein family. Homomultimerizes on viral ssDNA bound to pTP. Forms a initiation complex with viral polymerase, pTP and hosts NFIA and POU2F1/OCT1. Interacts with host SRCAP.

Its subcellular location is the host nucleus. Its function is as follows. Plays a role in the elongation phase of viral strand displacement replication by unwinding the template in an ATP-independent fashion, employing its capacity to form multimers. Also enhances the rate of initiation. Released from template upon second strand synthesis. Assembles in complex with viral pTP, viral pol, host NFIA and host POU2F1/OCT1 on viral origin of replication. Covers the whole ssDNA genome during synthesis. The complementary strand synthesis induces its relese from DNA template. May inhibit cellular transcription mediated by the interaction between host SRCAP and CBP. This is DNA-binding protein from Human adenovirus B serotype 7 (HAdV-7).